We begin with the raw amino-acid sequence, 377 residues long: Probable isocitrate dehydrogenase [NAD] subunit alpha, mitochondrial (377 aa).

Residues arginine 131, arginine 141, arginine 162, and aspartate 249 each contribute to the substrate site. Mg(2+) is bound by residues aspartate 249, aspartate 273, and aspartate 277.

This sequence belongs to the isocitrate and isopropylmalate dehydrogenases family. In terms of assembly, heterooligomer of subunits alpha, beta, and gamma in the apparent ratio of 2:1:1. Mg(2+) is required as a cofactor. Mn(2+) serves as cofactor.

The protein localises to the mitochondrion. It catalyses the reaction D-threo-isocitrate + NAD(+) = 2-oxoglutarate + CO2 + NADH. Functionally, probable catalytic subunit of the enzyme which catalyzes the decarboxylation of isocitrate (ICT) into alpha-ketoglutarate. This is Probable isocitrate dehydrogenase [NAD] subunit alpha, mitochondrial from Drosophila melanogaster (Fruit fly).